Consider the following 306-residue polypeptide: Ribose-5-phosphate isomerase (306 aa).

The segment at 45-68 is disordered; it reads GRAQFGVGSTSTSSGDANSVCPAP. Residues 51-61 are compositionally biased toward polar residues; that stretch reads VGSTSTSSGDA. Position 102 is a phosphoserine (S102).

This sequence belongs to the ribose 5-phosphate isomerase family.

It catalyses the reaction aldehydo-D-ribose 5-phosphate = D-ribulose 5-phosphate. The protein operates within carbohydrate degradation; pentose phosphate pathway; D-ribose 5-phosphate from D-ribulose 5-phosphate (non-oxidative stage): step 1/1. The polypeptide is Ribose-5-phosphate isomerase (Sus scrofa (Pig)).